We begin with the raw amino-acid sequence, 369 residues long: Endoglucanase (369 aa).

A signal peptide spans M1 to A22. E56 acts as the Proton donor in catalysis. D117 (nucleophile) is an active-site residue.

It belongs to the glycosyl hydrolase 8 (cellulase D) family.

The protein resides in the secreted. The enzyme catalyses Endohydrolysis of (1-&gt;4)-beta-D-glucosidic linkages in cellulose, lichenin and cereal beta-D-glucans.. Its pathway is glycan metabolism; bacterial cellulose biosynthesis. In terms of biological role, hydrolyzes carboxymethylcellulose. This is Endoglucanase (bcsZ) from Salmonella typhi.